The sequence spans 130 residues: Glycine cleavage system H protein (130 aa).

Residues 22-103 (KAYIGISDCA…PYGSWIIAVE (82 aa)) enclose the Lipoyl-binding domain. K63 is subject to N6-lipoyllysine.

Belongs to the GcvH family. In terms of assembly, the glycine cleavage system is composed of four proteins: P, T, L and H. Requires (R)-lipoate as cofactor.

Its function is as follows. The glycine cleavage system catalyzes the degradation of glycine. The H protein shuttles the methylamine group of glycine from the P protein to the T protein. The polypeptide is Glycine cleavage system H protein (Clostridium botulinum (strain Kyoto / Type A2)).